The primary structure comprises 406 residues: Arginine decarboxylase (406 aa).

Position 8 is an N6-(pyridoxal phosphate)lysine (K8). 192–202 (VDFGGGLGIDY) contacts substrate.

Belongs to the Orn/Lys/Arg decarboxylase class-II family. SpeA subfamily. It depends on pyridoxal 5'-phosphate as a cofactor. Mg(2+) is required as a cofactor.

It catalyses the reaction L-arginine + H(+) = agmatine + CO2. It participates in amine and polyamine biosynthesis; agmatine biosynthesis; agmatine from L-arginine: step 1/1. The polypeptide is Arginine decarboxylase (SPE2) (Theobroma cacao (Cacao)).